The chain runs to 210 residues: Na(+)-translocating NADH-quinone reductase subunit D (210 aa).

Helical transmembrane passes span 14 to 34 (PIVS…ALAV), 42 to 62 (LVMT…ISIL), 72 to 92 (IIVQ…VLQA), 103 to 123 (VFVG…AYAM), 131 to 151 (FMDG…VGFI), and 178 to 198 (NGLL…IWII).

Belongs to the NqrDE/RnfAE family. As to quaternary structure, composed of six subunits; NqrA, NqrB, NqrC, NqrD, NqrE and NqrF.

Its subcellular location is the cell inner membrane. The catalysed reaction is a ubiquinone + n Na(+)(in) + NADH + H(+) = a ubiquinol + n Na(+)(out) + NAD(+). NQR complex catalyzes the reduction of ubiquinone-1 to ubiquinol by two successive reactions, coupled with the transport of Na(+) ions from the cytoplasm to the periplasm. NqrA to NqrE are probably involved in the second step, the conversion of ubisemiquinone to ubiquinol. The protein is Na(+)-translocating NADH-quinone reductase subunit D of Shewanella halifaxensis (strain HAW-EB4).